Here is a 306-residue protein sequence, read N- to C-terminus: Methionyl-tRNA formyltransferase (306 aa).

Residue 105-108 (SLLP) coordinates (6S)-5,6,7,8-tetrahydrofolate.

Belongs to the Fmt family.

It catalyses the reaction L-methionyl-tRNA(fMet) + (6R)-10-formyltetrahydrofolate = N-formyl-L-methionyl-tRNA(fMet) + (6S)-5,6,7,8-tetrahydrofolate + H(+). In terms of biological role, attaches a formyl group to the free amino group of methionyl-tRNA(fMet). The formyl group appears to play a dual role in the initiator identity of N-formylmethionyl-tRNA by promoting its recognition by IF2 and preventing the misappropriation of this tRNA by the elongation apparatus. In Rubrobacter xylanophilus (strain DSM 9941 / JCM 11954 / NBRC 16129 / PRD-1), this protein is Methionyl-tRNA formyltransferase.